Reading from the N-terminus, the 144-residue chain is Protein NrdI (144 aa).

Belongs to the NrdI family.

In terms of biological role, probably involved in ribonucleotide reductase function. This Streptococcus pyogenes serotype M4 (strain MGAS10750) protein is Protein NrdI.